We begin with the raw amino-acid sequence, 777 residues long: Hepatocyte growth factor-regulated tyrosine kinase substrate (777 aa).

The VHS domain occupies 15 to 143 (ATSQLLLETD…IMKVEGHVFP (129 aa)). The FYVE-type zinc-finger motif lies at 160 to 220 (WVDAEECHRC…VCEPCFEQLN (61 aa)). Cys166, Cys169, Cys182, Cys185, Cys190, and Cys193 together coordinate Zn(2+). An N6-acetyllysine modification is found at Lys207. 2 residues coordinate Zn(2+): Cys212 and Cys215. Positions 223 to 319 (AEGKAASTTE…SPVNSSAPLA (97 aa)) are disordered. The segment at 225 to 541 (GKAASTTELP…QRLQEQEKER (317 aa)) is interaction with SNX1. Positions 258–277 (QEEEELQLALALSQSEAEEK) constitute a UIM domain. Over residues 292–311 (AEPTPVASSAPPASSLYSSP) the composition is skewed to low complexity. Tyr308, Tyr329, and Tyr334 each carry phosphotyrosine. Residues 338-370 (KQEEARKSPTPSAPVPLTEPTAQPGEGHAIPAN) are disordered. Residues 443-541 (SINTMHPQLL…QRLQEQEKER (99 aa)) are interaction with SNAP25 and TRAK2. Residues 452 to 570 (LELLNQLDER…FSLPYAQLQA (119 aa)) are interaction with STAM. The segment at 478–777 (ARGALSALRE…GSEAQLISFD (300 aa)) is interaction with NF2. Lys549 carries the N6-succinyllysine modification. The span at 645–658 (AAAQGPAGPTTSPA) shows a compositional bias: low complexity. Disordered regions lie at residues 645 to 698 (AAAQ…YMGS) and 712 to 777 (NLMP…ISFD). 2 stretches are compositionally biased toward polar residues: residues 659–698 (YSSYQPTPTQGYQTVASQAPQSLPAISQPPQSGTMGYMGS) and 730–739 (PYISGQQPVY). Over residues 753 to 777 (PPVAQQPPAQGPPAQGSEAQLISFD) the composition is skewed to low complexity.

In terms of assembly, component of the ESCRT-0 complex composed of STAM or STAM2 and HGS. Part of a complex at least composed of HSG, STAM2 (or probably STAM) and EPS15. Interacts with STAM. Interacts with STAM2. Interacts with EPS15; the interaction is direct, calcium-dependent and inhibited by SNAP25. Identified in a complex with STAM and LITAF. Found in a complex with STAM and E3 ligase ITCH and DTX3L. Interacts with E3 ligase DTX3L; the interaction brings together STAM and HSG, promotes their recruitment to early endosomes and decreases STAM and HGS ubiquitination by ITCH. Interacts with NF2; the interaction is direct. Interacts with ubiquitin; the interaction is direct. Interacts with VPS37C. Interacts with SMAD1, SMAD2 and SMAD3. Interacts with TSG101; the interaction mediates the association with the ESCRT-I complex. Interacts with SNAP25; the interaction is direct and decreases with addition of increasing concentrations of free calcium. Interacts with SNX1; the interaction is direct. Component of a 550 kDa membrane complex at least composed of HGS and SNX1 but excluding EGFR. Interacts with TRAK1. Interacts with TRAK2. Component of the CART complex, at least composed of ACTN4, HGS/HRS, MYO5B and TRIM3. Interacts (via UIM domain) with UBQLN1 (via ubiquitin-like domain). Interacts with ARRDC3. Identified in a complex containing at least ARRDC4, AVPR2 and HGS. Interacts with LAPTM4B; promotes HGS ubiquitination. In terms of processing, phosphorylated on Tyr-334. A minor site of phosphorylation on Tyr-329 is detected. Phosphorylation occurs in response to EGF, IL-2, GM-CSF and HGF. Ubiquitinated by ITCH.

Its subcellular location is the cytoplasm. It is found in the early endosome membrane. The protein localises to the endosome. The protein resides in the multivesicular body membrane. Involved in intracellular signal transduction mediated by cytokines and growth factors. When associated with STAM it suppresses DNA signaling upon stimulation by IL-2 and GM-CSF. Could be a direct effector of PI3-kinase in vesicular pathway via early endosomes and may regulate trafficking to early and late endosomes by recruiting clathrin. May concentrate ubiquitinated receptors within clathrin-coated regions. Involved in down-regulation of receptor tyrosine kinase via multivesicular body (MVBs) when complexed with STAM (ESCRT-0 complex). The ESCRT-0 complex binds ubiquitin and acts as a sorting machinery that recognizes ubiquitinated receptors and transfers them to further sequential lysosomal sorting/trafficking processes. May contribute to the efficient recruitment of SMADs to the activin receptor complex. Involved in receptor recycling via its association with the CART complex, a multiprotein complex required for efficient transferrin receptor recycling but not for EGFR degradation. This is Hepatocyte growth factor-regulated tyrosine kinase substrate (HGS) from Bos taurus (Bovine).